The sequence spans 212 residues: Pyridoxine/pyridoxamine 5'-phosphate oxidase (212 aa).

Substrate is bound by residues 8 to 11 (RREY) and Lys66. Residues 61-66 (RIVLLK), 76-77 (FT), Arg82, Lys83, and Gln105 contribute to the FMN site. The substrate site is built by Tyr123, Arg127, and Ser131. FMN is bound by residues 140-141 (QS) and Trp185. 191–193 (RLH) is a substrate binding site. Arg195 provides a ligand contact to FMN.

The protein belongs to the pyridoxamine 5'-phosphate oxidase family. Homodimer. It depends on FMN as a cofactor.

It catalyses the reaction pyridoxamine 5'-phosphate + O2 + H2O = pyridoxal 5'-phosphate + H2O2 + NH4(+). It carries out the reaction pyridoxine 5'-phosphate + O2 = pyridoxal 5'-phosphate + H2O2. The protein operates within cofactor metabolism; pyridoxal 5'-phosphate salvage; pyridoxal 5'-phosphate from pyridoxamine 5'-phosphate: step 1/1. It functions in the pathway cofactor metabolism; pyridoxal 5'-phosphate salvage; pyridoxal 5'-phosphate from pyridoxine 5'-phosphate: step 1/1. Catalyzes the oxidation of either pyridoxine 5'-phosphate (PNP) or pyridoxamine 5'-phosphate (PMP) into pyridoxal 5'-phosphate (PLP). This chain is Pyridoxine/pyridoxamine 5'-phosphate oxidase, found in Shewanella baltica (strain OS155 / ATCC BAA-1091).